Consider the following 476-residue polypeptide: tRNA(Ile)-lysidine synthase (476 aa).

25 to 30 contacts ATP; the sequence is SGGPDS.

The protein belongs to the tRNA(Ile)-lysidine synthase family.

Its subcellular location is the cytoplasm. The enzyme catalyses cytidine(34) in tRNA(Ile2) + L-lysine + ATP = lysidine(34) in tRNA(Ile2) + AMP + diphosphate + H(+). Functionally, ligates lysine onto the cytidine present at position 34 of the AUA codon-specific tRNA(Ile) that contains the anticodon CAU, in an ATP-dependent manner. Cytidine is converted to lysidine, thus changing the amino acid specificity of the tRNA from methionine to isoleucine. The protein is tRNA(Ile)-lysidine synthase of Bacillus licheniformis (strain ATCC 14580 / DSM 13 / JCM 2505 / CCUG 7422 / NBRC 12200 / NCIMB 9375 / NCTC 10341 / NRRL NRS-1264 / Gibson 46).